We begin with the raw amino-acid sequence, 89 residues long: Mitochondrial import inner membrane translocase subunit Tim9 (89 aa).

Ala2 carries the N-acetylalanine modification. A Twin CX3C motif motif is present at residues 28–52; the sequence is CFLDCVKDFTTREVKPEEVTCSEHC. 2 disulfide bridges follow: Cys28–Cys52 and Cys32–Cys48.

The protein belongs to the small Tim family. Heterohexamer; composed of 3 copies of TIMM9 and 3 copies of TIMM10/TIM10A, named soluble 70 kDa complex. The complex forms a 6-bladed alpha-propeller structure and associates with the TIMM22 component of the TIM22 complex. Interacts with multi-pass transmembrane proteins in transit. Also forms a complex composed of TIMM9, TIMM10/TIM10A and FXC1/TIM10B.

Its subcellular location is the mitochondrion inner membrane. Mitochondrial intermembrane chaperone that participates in the import and insertion of multi-pass transmembrane proteins into the mitochondrial inner membrane. May also be required for the transfer of beta-barrel precursors from the TOM complex to the sorting and assembly machinery (SAM complex) of the outer membrane. Acts as a chaperone-like protein that protects the hydrophobic precursors from aggregation and guide them through the mitochondrial intermembrane space. In Rattus norvegicus (Rat), this protein is Mitochondrial import inner membrane translocase subunit Tim9 (Timm9).